The primary structure comprises 207 residues: Large ribosomal subunit protein uL4 (207 aa).

The disordered stretch occupies residues 49–78 (HAVKNRSAVSGGGRKPWRQKGTGRARQGSI).

This sequence belongs to the universal ribosomal protein uL4 family. Part of the 50S ribosomal subunit.

Functionally, one of the primary rRNA binding proteins, this protein initially binds near the 5'-end of the 23S rRNA. It is important during the early stages of 50S assembly. It makes multiple contacts with different domains of the 23S rRNA in the assembled 50S subunit and ribosome. Forms part of the polypeptide exit tunnel. The protein is Large ribosomal subunit protein uL4 of Streptococcus pyogenes serotype M49 (strain NZ131).